The primary structure comprises 356 residues: A-type ATP synthase subunit C (356 aa).

Belongs to the V-ATPase V0D/AC39 subunit family. Has multiple subunits with at least A(3), B(3), C, D, E, F, H, I and proteolipid K(x).

The protein resides in the cell membrane. Component of the A-type ATP synthase that produces ATP from ADP in the presence of a proton gradient across the membrane. The polypeptide is A-type ATP synthase subunit C (Thermoplasma acidophilum (strain ATCC 25905 / DSM 1728 / JCM 9062 / NBRC 15155 / AMRC-C165)).